Here is a 322-residue protein sequence, read N- to C-terminus: Cytochrome c biogenesis protein CcsA (322 aa).

Transmembrane regions (helical) follow at residues 9 to 29 (ILTH…LITL), 44 to 64 (GMIV…ASSG), 143 to 163 (MLLS…ILII), 226 to 246 (VISL…VWAN), 259 to 276 (ETWA…LHSR), and 289 to 309 (IASI…LLGI).

This sequence belongs to the CcmF/CycK/Ccl1/NrfE/CcsA family. As to quaternary structure, may interact with Ccs1.

The protein localises to the plastid. It is found in the chloroplast thylakoid membrane. Its function is as follows. Required during biogenesis of c-type cytochromes (cytochrome c6 and cytochrome f) at the step of heme attachment. This Triticum aestivum (Wheat) protein is Cytochrome c biogenesis protein CcsA.